The following is a 266-amino-acid chain: Vitamin B12-binding protein (266 aa).

The N-terminal stretch at 1–22 is a signal peptide; the sequence is MAKQMFRALVALLLTLPVWLYA. Residues 25-266 enclose the Fe/B12 periplasmic-binding domain; it reads RVITLSPANT…QLCNALSQVN (242 aa). Residues tyrosine 50 and 242–246 contribute to the cyanocob(III)alamin site; that span reads DWFER. A disulfide bond links cysteine 183 and cysteine 259.

Belongs to the BtuF family. The complex is composed of two ATP-binding proteins (BtuD), two transmembrane proteins (BtuC) and a solute-binding protein (BtuF).

It localises to the periplasm. In terms of biological role, part of the ABC transporter complex BtuCDF involved in vitamin B12 import. Binds vitamin B12 and delivers it to the periplasmic surface of BtuC. This is Vitamin B12-binding protein from Salmonella paratyphi A (strain ATCC 9150 / SARB42).